The primary structure comprises 198 residues: Cerebellin-4 (198 aa).

The first 24 residues, methionine 1 to alanine 24, serve as a signal peptide directing secretion. N-linked (GlcNAc...) asparagine glycans are attached at residues asparagine 26 and asparagine 85. A C1q domain is found at alanine 63–leucine 198.

As to quaternary structure, homohexamer; disulfide-linked homotrimers. The trimers are assembled via the globular C1q domains. The trimers associate via N-terminal cysteine residues to form disulfide-linked hexamers. May form oligomers with CBLN1, CBLN2 and CBLN3 prior to secretion. Once secreted, does not interact with other CBLN family members. Strongly interacts with DCC in a NTN1-displaceable fashion. Weakly binds to NRXN1 and NRXN2 long and short isoforms produced by alternative promoter usage. Interaction with NRXN3 short isoform is hardly detectable; no interaction at all with NRXN3 long isoform. Does not interact with NEO1, GRID1 and GRID2. In terms of processing, sialoglycoprotein. Expressed in brain with high levels in particular thalamic nuclei. In the thalamus, predominantly expressed in neurons within the parafascicular nucleus. Found in the hippocampus, mostly in the dendrites and somata of pyramidal neurons (at protein level). Very low or no expression in most other brain regions. Highly expressed in the ventral medial habenula.

The protein localises to the secreted. It is found in the synapse. Acts as a synaptic organizer in specific subsets of neurons in the brain. Essential for the formation and maintenance of inhibitory GABAergic synapses. Promotes the development of dendrite-targeting inhibitory GABAergic synapses made by somatostatin-positive interneurons. May contribute to the function of ventral medial habenula region of the brain implicated in the regulation of anxiety-related behaviors. May play a role in CBLN3 export from the endoplasmic reticulum and secretion. In Mus musculus (Mouse), this protein is Cerebellin-4 (Cbln4).